A 189-amino-acid chain; its full sequence is MKDIKPAILLFIMFTIICGGIYPALVTGIAHALFPDQAKGSLIIDKAGKELGSNLIGQPFSAPQYLWPRPSVTAEFGYNPSASGGSNSGQTNPDYLKTVAERVKTLRESGMTGLIPTELAQASASGLDPHLSPQAARLQAARIAKARGIPETAVQKLINENTAGPQLGILGAARVNVLAVNLKLDTLTR.

A helical membrane pass occupies residues 6-26; it reads PAILLFIMFTIICGGIYPALV.

The protein belongs to the KdpC family. In terms of assembly, the system is composed of three essential subunits: KdpA, KdpB and KdpC.

The protein resides in the cell inner membrane. In terms of biological role, part of the high-affinity ATP-driven potassium transport (or Kdp) system, which catalyzes the hydrolysis of ATP coupled with the electrogenic transport of potassium into the cytoplasm. This subunit acts as a catalytic chaperone that increases the ATP-binding affinity of the ATP-hydrolyzing subunit KdpB by the formation of a transient KdpB/KdpC/ATP ternary complex. In Trichlorobacter lovleyi (strain ATCC BAA-1151 / DSM 17278 / SZ) (Geobacter lovleyi), this protein is Potassium-transporting ATPase KdpC subunit.